The chain runs to 182 residues: Early upstream open reading frame (182 aa).

It belongs to the EUO family.

The polypeptide is Early upstream open reading frame (Chlamydophila psittaci (strain ATCC VR-125 / 6BC) (Chlamydia psittaci)).